The chain runs to 392 residues: MTIRNQRLSLLKQPISSTLNQHLIDYPTPSNLSYWWGFGSLAGICLVIQIVTGVFLAMHYTPHVDLAFNSVEHVMRDVEGGWLLRYMHANGASMFLIVVHLHIFRGLYHASYSSPREFVRCLGVVIFLLMIVTAFTGYVPPWGQMSFWGATVITSLASAIPVVGDTIVTWLWGGFSVDNATLNRFFSLHHLLPFILVGASLLHLAALHQYGSNNPLGVHSEMDQISFYPYFYVKDLVGWVAFAIFFSIWIFYAPNVLGHPDNYIPANPMPTPPHIVPEWYFLPIHAILRSIPDKSGGVAAIAPVFICLLALPFFKSMYVRSSSFRPIHQGIFWLLLADRLLLGWIGCQPVEAPFVTIGQIPPFVFFLFFAITPIPGRVGRGIPNYYTDETDQ.

4 helical membrane passes run F38–M58, W82–F104, V119–V139, and F185–A205. H88 and H102 together coordinate heme b. Heme b-binding residues include H189 and H203. H208 contributes to the a ubiquinone binding site. Transmembrane regions (helical) follow at residues F231–F251, S295–K315, I327–C347, and F354–P373.

The protein belongs to the cytochrome b family. In terms of assembly, the main subunits of complex b-c1 are: cytochrome b, cytochrome c1 and the Rieske protein. Heme b serves as cofactor.

Its subcellular location is the mitochondrion inner membrane. In terms of biological role, component of the ubiquinol-cytochrome c reductase complex (complex III or cytochrome b-c1 complex) that is part of the mitochondrial respiratory chain. The b-c1 complex mediates electron transfer from ubiquinol to cytochrome c. Contributes to the generation of a proton gradient across the mitochondrial membrane that is then used for ATP synthesis. The sequence is that of Cytochrome b (MT-CYB) from Pisum sativum (Garden pea).